Consider the following 786-residue polypeptide: DNA repair and recombination protein RAD54-like (786 aa).

The interval 2–9 (RRSLAPSQ) is required for chromatin remodeling, strand pairing activities and coupling of ATPase activity. Phosphothreonine is present on Thr22. The region spanning 165 to 340 (EGKRGSFNGC…FSLVNFVNPE (176 aa)) is the Helicase ATP-binding domain. An ATP-binding site is contributed by 178–185 (DEMGLGKT). The short motif at 291–294 (DEGH) is the DEGH box element. The Helicase C-terminal domain occupies 497 to 654 (LLDFMLAAIR…NNESVEKHFT (158 aa)). The tract at residues 738–786 (EAKPAATTTDEDEELSDSKRKAKKTLASDDDDDEDFVLNCSSGEEFSGF) is disordered. Positions 776 to 786 (NCSSGEEFSGF) are enriched in polar residues.

The protein belongs to the SNF2/RAD54 helicase family. Interacts (via N-terminus) with spn-A/Rad51.

It localises to the nucleus. Functionally, involved in mitotic DNA repair and meiotic recombination. Functions in the recombinational DNA repair pathway. Essential for interhomolog gene conversion (GC), but may have a less important role in intersister GC than spn-A/Rad51. In the presence of DNA, spn-A/Rad51 enhances the ATPase activity of okr/Rad54. This is DNA repair and recombination protein RAD54-like from Drosophila grimshawi (Hawaiian fruit fly).